The primary structure comprises 356 residues: Protein MGF 360-3L (356 aa).

The stretch at 61–93 (KLNTALVLAVKENNDDLIMLFTEWGANINYGLL) is one ANK repeat.

This sequence belongs to the asfivirus MGF 360 family.

Functionally, plays a role in virus cell tropism, and may be required for efficient virus replication in macrophages. The polypeptide is Protein MGF 360-3L (Ornithodoros (relapsing fever ticks)).